Consider the following 325-residue polypeptide: ATP-dependent (S)-NAD(P)H-hydrate dehydratase (325 aa).

Residues 9–315 form the YjeF C-terminal domain; the sequence is LLKKVYNMVP…EHVHTAFLNV (307 aa). Residues Gly-119 and 172-178 contribute to the (6S)-NADPHX site; that span reads NVVEFGR. Residues 211–215 and 230–239 contribute to the ATP site; these read KGAKD and GGLKRSGGQG. Position 240 (Asp-240) interacts with (6S)-NADPHX.

Belongs to the NnrD/CARKD family. Mg(2+) is required as a cofactor.

It localises to the cytoplasm. The enzyme catalyses (6S)-NADHX + ATP = ADP + phosphate + NADH + H(+). It carries out the reaction (6S)-NADPHX + ATP = ADP + phosphate + NADPH + H(+). In terms of biological role, catalyzes the dehydration of the S-form of NAD(P)HX at the expense of ATP, which is converted to ADP. Together with NAD(P)HX epimerase, which catalyzes the epimerization of the S- and R-forms, the enzyme allows the repair of both epimers of NAD(P)HX, a damaged form of NAD(P)H that is a result of enzymatic or heat-dependent hydration. This Phaeosphaeria nodorum (strain SN15 / ATCC MYA-4574 / FGSC 10173) (Glume blotch fungus) protein is ATP-dependent (S)-NAD(P)H-hydrate dehydratase.